A 1196-amino-acid polypeptide reads, in one-letter code: Chromosome partition protein Smc (1196 aa).

32-39 is a binding site for ATP; the sequence is PNGSGKSN. 2 coiled-coil regions span residues 168-288 and 327-497; these read LKHR…SVQQ and DALE…LERK. In terms of domain architecture, SMC hinge spans 510-621; it reads AGILGPMAKL…VDDLDRALAL (112 aa). Coiled-coil stretches lie at residues 654 to 829 and 972 to 1026; these read LEVT…RAQQ and DRPT…KDLL.

This sequence belongs to the SMC family. Homodimer.

It is found in the cytoplasm. Required for chromosome condensation and partitioning. The polypeptide is Chromosome partition protein Smc (Mycolicibacterium paratuberculosis (strain ATCC BAA-968 / K-10) (Mycobacterium paratuberculosis)).